The sequence spans 447 residues: Tubulin beta-1 chain (447 aa).

Glutamine 11, glutamate 69, serine 138, glycine 142, threonine 143, glycine 144, asparagine 204, and asparagine 226 together coordinate GTP. Residue glutamate 69 coordinates Mg(2+). Over residues 411 to 427 the composition is skewed to polar residues; that stretch reads AESNMNDLVSEYQQYQD. Residues 411–447 form a disordered region; it reads AESNMNDLVSEYQQYQDATADEEGDYEDEEEQVPEDE. Positions 429–447 are enriched in acidic residues; sequence TADEEGDYEDEEEQVPEDE.

The protein belongs to the tubulin family. Dimer of alpha and beta chains. A typical microtubule is a hollow water-filled tube with an outer diameter of 25 nm and an inner diameter of 15 nM. Alpha-beta heterodimers associate head-to-tail to form protofilaments running lengthwise along the microtubule wall with the beta-tubulin subunit facing the microtubule plus end conferring a structural polarity. Microtubules usually have 13 protofilaments but different protofilament numbers can be found in some organisms and specialized cells. Mg(2+) is required as a cofactor. In terms of tissue distribution, expressed in leaf sheaths.

Its subcellular location is the cytoplasm. It localises to the cytoskeleton. Tubulin is the major constituent of microtubules, a cylinder consisting of laterally associated linear protofilaments composed of alpha- and beta-tubulin heterodimers. Microtubules grow by the addition of GTP-tubulin dimers to the microtubule end, where a stabilizing cap forms. Below the cap, tubulin dimers are in GDP-bound state, owing to GTPase activity of alpha-tubulin. This Oryza sativa subsp. japonica (Rice) protein is Tubulin beta-1 chain (TUBB1).